Consider the following 227-residue polypeptide: Cytochrome c oxidase subunit 2 (227 aa).

Residues 1–14 (MAHATQVGLQDATS) lie on the Mitochondrial intermembrane side of the membrane. The helical transmembrane segment at 15–45 (PIMEELISFHDHALMIIFLISFLVLYALFLT) threads the bilayer. Residues 46 to 59 (LTTKLTNTNITDAQ) lie on the Mitochondrial matrix side of the membrane. A helical transmembrane segment spans residues 60 to 87 (EMETVWTILPAIILVLIALPSLRILYLT). The Mitochondrial intermembrane portion of the chain corresponds to 88–227 (DEINDPSFTI…IFEMGPVFTL (140 aa)). Residues His161, Cys196, Glu198, Cys200, His204, and Met207 each coordinate Cu cation. Residue Glu198 coordinates Mg(2+).

The protein belongs to the cytochrome c oxidase subunit 2 family. In terms of assembly, component of the cytochrome c oxidase (complex IV, CIV), a multisubunit enzyme composed of 14 subunits. The complex is composed of a catalytic core of 3 subunits MT-CO1, MT-CO2 and MT-CO3, encoded in the mitochondrial DNA, and 11 supernumerary subunits COX4I, COX5A, COX5B, COX6A, COX6B, COX6C, COX7A, COX7B, COX7C, COX8 and NDUFA4, which are encoded in the nuclear genome. The complex exists as a monomer or a dimer and forms supercomplexes (SCs) in the inner mitochondrial membrane with NADH-ubiquinone oxidoreductase (complex I, CI) and ubiquinol-cytochrome c oxidoreductase (cytochrome b-c1 complex, complex III, CIII), resulting in different assemblies (supercomplex SCI(1)III(2)IV(1) and megacomplex MCI(2)III(2)IV(2)). Found in a complex with TMEM177, COA6, COX18, COX20, SCO1 and SCO2. Interacts with TMEM177 in a COX20-dependent manner. Interacts with COX20. Interacts with COX16. Cu cation is required as a cofactor.

The protein resides in the mitochondrion inner membrane. The enzyme catalyses 4 Fe(II)-[cytochrome c] + O2 + 8 H(+)(in) = 4 Fe(III)-[cytochrome c] + 2 H2O + 4 H(+)(out). Its function is as follows. Component of the cytochrome c oxidase, the last enzyme in the mitochondrial electron transport chain which drives oxidative phosphorylation. The respiratory chain contains 3 multisubunit complexes succinate dehydrogenase (complex II, CII), ubiquinol-cytochrome c oxidoreductase (cytochrome b-c1 complex, complex III, CIII) and cytochrome c oxidase (complex IV, CIV), that cooperate to transfer electrons derived from NADH and succinate to molecular oxygen, creating an electrochemical gradient over the inner membrane that drives transmembrane transport and the ATP synthase. Cytochrome c oxidase is the component of the respiratory chain that catalyzes the reduction of oxygen to water. Electrons originating from reduced cytochrome c in the intermembrane space (IMS) are transferred via the dinuclear copper A center (CU(A)) of subunit 2 and heme A of subunit 1 to the active site in subunit 1, a binuclear center (BNC) formed by heme A3 and copper B (CU(B)). The BNC reduces molecular oxygen to 2 water molecules using 4 electrons from cytochrome c in the IMS and 4 protons from the mitochondrial matrix. This chain is Cytochrome c oxidase subunit 2 (MT-CO2), found in Hylobates lar (Lar gibbon).